The following is a 24-amino-acid chain: Coenzyme PQQ synthesis protein A (24 aa).

A cross-link (pyrroloquinoline quinone (Glu-Tyr)) is located at residues 16 to 20 (EITMY).

This sequence belongs to the PqqA family.

It participates in cofactor biosynthesis; pyrroloquinoline quinone biosynthesis. Its function is as follows. Required for coenzyme pyrroloquinoline quinone (PQQ) biosynthesis. PQQ is probably formed by cross-linking a specific glutamate to a specific tyrosine residue and excising these residues from the peptide. This chain is Coenzyme PQQ synthesis protein A, found in Burkholderia cenocepacia (strain ATCC BAA-245 / DSM 16553 / LMG 16656 / NCTC 13227 / J2315 / CF5610) (Burkholderia cepacia (strain J2315)).